The chain runs to 590 residues: (+)-sabinene synthase, chloroplastic (590 aa).

Residues 1–51 constitute a chloroplast transit peptide; that stretch reads MSSISINIAMPLNSLHNFERKPSKAWSTSCTAPAARLRASSSLQQEKPHQI. Mg(2+) contacts are provided by Asp343, Asp347, Asp487, Thr491, and Glu495. Residues 343 to 347 carry the DDXXD motif motif; sequence DDVYD.

This sequence belongs to the terpene synthase family. Monomer. The cofactor is Mg(2+).

The protein localises to the plastid. The protein resides in the chloroplast. It carries out the reaction (2E)-geranyl diphosphate = (1R,5R)-sabinene + diphosphate. It functions in the pathway terpene metabolism; sabinene hydrate biosynthesis. Functionally, catalyzes the formation of the (-)-3-isothujone precursor sabinene from geranyl diphosphate. The enzyme also produces significant amounts of gamma-terpinene, terpinolene and limonene. The polypeptide is (+)-sabinene synthase, chloroplastic (Salvia officinalis (Sage)).